The following is a 55-amino-acid chain: Light-harvesting polypeptide B-800/860 beta chain (55 aa).

Residues 1–21 (ADANKVWPTGLTVAEAEELHT) are Cytoplasmic-facing. A helical membrane pass occupies residues 22–44 (YVTNGFRVFVGIAVVAHVLVFAA). Histidine 38 serves as a coordination point for a bacteriochlorophyll. The Periplasmic segment spans residues 45 to 55 (HPWGRGGALVA).

It belongs to the antenna complex beta subunit family. The core complex is formed by different alpha and beta chains, binding bacteriochlorophyll molecules, and arranged most probably in tetrameric structures disposed around the reaction center. The non-pigmented gamma chains may constitute additional components.

The protein resides in the cell inner membrane. Functionally, antenna complexes are light-harvesting systems, which transfer the excitation energy to the reaction centers. This chain is Light-harvesting polypeptide B-800/860 beta chain, found in Rhodocyclus tenuis (Rhodospirillum tenue).